Here is a 132-residue protein sequence, read N- to C-terminus: 3-aminoacrylate deaminase RutC (132 aa).

The protein belongs to the RutC family.

It catalyses the reaction (Z)-3-aminoacrylate + H2O + H(+) = 3-oxopropanoate + NH4(+). Its function is as follows. Involved in pyrimidine catabolism. Catalyzes the deamination of 3-aminoacrylate to malonic semialdehyde, a reaction that can also occur spontaneously. RutC may facilitate the reaction and modulate the metabolic fitness, rather than catalyzing essential functions. This chain is 3-aminoacrylate deaminase RutC, found in Cronobacter sakazakii (strain ATCC BAA-894) (Enterobacter sakazakii).